The primary structure comprises 426 residues: MQLRTNVKHLQGTLMVPSDKSISHRSIMFGAISSGKTTITNFLRGEDCLSTLAAFRSLGVNIEDDGTTITVEGRGFAGLKKAKNTIDVGNSGTTIRLMLGILAGCPFETRLAGDASIAKRPMNRVMLPLNQMGAECQGVQQTEFPPISIRGTQNLQPIDYTMPVASAQVKSAILFAALQAEGTSVVVEKEKTRDHTEEMIRQFGGTLEVDGKKIMLTGPQQLTGQNVVVPGDISSAAFFLVAGLVVPDSEILLKNVGLNQTRTGILDVIKNMGGSVTILNEDEANHSGDLLVKTSQLTATEIGGAIIPRLIDELPIIALLATQATGTTIIRDAEELKVKETNRIDAVAKELTILGADITPTDDGLIIHGPTSLHGGRVTSYGDHRIGMMLQIAALLVKEGTVELDKAEAVSVSYPAFFDDLERLSC.

3 residues coordinate 3-phosphoshikimate: Lys20, Ser21, and Arg25. Lys20 provides a ligand contact to phosphoenolpyruvate. Gly92 and Arg120 together coordinate phosphoenolpyruvate. 3-phosphoshikimate contacts are provided by Ser166, Gln168, Asp312, and Lys339. Gln168 contacts phosphoenolpyruvate. Catalysis depends on Asp312, which acts as the Proton acceptor. 2 residues coordinate phosphoenolpyruvate: Arg343 and Arg385.

It belongs to the EPSP synthase family. In terms of assembly, monomer.

Its subcellular location is the cytoplasm. It catalyses the reaction 3-phosphoshikimate + phosphoenolpyruvate = 5-O-(1-carboxyvinyl)-3-phosphoshikimate + phosphate. Its pathway is metabolic intermediate biosynthesis; chorismate biosynthesis; chorismate from D-erythrose 4-phosphate and phosphoenolpyruvate: step 6/7. Its function is as follows. Catalyzes the transfer of the enolpyruvyl moiety of phosphoenolpyruvate (PEP) to the 5-hydroxyl of shikimate-3-phosphate (S3P) to produce enolpyruvyl shikimate-3-phosphate and inorganic phosphate. In Enterococcus faecalis (strain ATCC 700802 / V583), this protein is 3-phosphoshikimate 1-carboxyvinyltransferase.